A 259-amino-acid chain; its full sequence is Thiazole synthase (259 aa).

Catalysis depends on Lys-99, which acts as the Schiff-base intermediate with DXP. 1-deoxy-D-xylulose 5-phosphate-binding positions include Gly-160, Ala-186 to Gly-187, and Asn-208 to Thr-209.

The protein belongs to the ThiG family. As to quaternary structure, homotetramer. Forms heterodimers with either ThiH or ThiS.

It is found in the cytoplasm. It carries out the reaction [ThiS sulfur-carrier protein]-C-terminal-Gly-aminoethanethioate + 2-iminoacetate + 1-deoxy-D-xylulose 5-phosphate = [ThiS sulfur-carrier protein]-C-terminal Gly-Gly + 2-[(2R,5Z)-2-carboxy-4-methylthiazol-5(2H)-ylidene]ethyl phosphate + 2 H2O + H(+). It functions in the pathway cofactor biosynthesis; thiamine diphosphate biosynthesis. In terms of biological role, catalyzes the rearrangement of 1-deoxy-D-xylulose 5-phosphate (DXP) to produce the thiazole phosphate moiety of thiamine. Sulfur is provided by the thiocarboxylate moiety of the carrier protein ThiS. In vitro, sulfur can be provided by H(2)S. This Porphyromonas gingivalis (strain ATCC 33277 / DSM 20709 / CIP 103683 / JCM 12257 / NCTC 11834 / 2561) protein is Thiazole synthase.